Reading from the N-terminus, the 431-residue chain is STE20-related kinase adapter protein alpha (431 aa).

2 positions are modified to phosphoserine: serine 2 and serine 46. Positions 69-379 (YELLTVIGKG…ASTLLNHSFF (311 aa)) constitute a Protein kinase domain. The tract at residues 310 to 347 (LTMSPSRSVANSGLSDSLTTSTPRPSNGDSPSHPYHRT) is disordered. The segment covering 312–339 (MSPSRSVANSGLSDSLTTSTPRPSNGDS) has biased composition (polar residues). A phosphothreonine; by LKB1 mark is found at threonine 329 and threonine 419.

This sequence belongs to the protein kinase superfamily. STE Ser/Thr protein kinase family. STE20 subfamily. Component of a trimeric complex composed of STK11/LKB1, STRAD (STRADA or STRADB) and CAB39/MO25 (CAB39/MO25alpha or CAB39L/MO25beta): the complex tethers STK11/LKB1 in the cytoplasm and stimulates its catalytic activity.

The protein resides in the nucleus. Its subcellular location is the cytoplasm. Its function is as follows. Pseudokinase which, in complex with CAB39/MO25 (CAB39/MO25alpha or CAB39L/MO25beta), binds to and activates STK11/LKB1. Adopts a closed conformation typical of active protein kinases and binds STK11/LKB1 as a pseudosubstrate, promoting conformational change of STK11/LKB1 in an active conformation. The protein is STE20-related kinase adapter protein alpha (STRADA) of Homo sapiens (Human).